The chain runs to 966 residues: MTSCVLAGSIETTPKVSPGDSEAKPLIFTFVPTLRRLPTHIQLADTSKFLVKIPEEPTDKNPETVNRFEYSDHMTFSCESKEERDQRILDYPSEVSGKNSQRKEFNTKEPQGMQKGDLFKAEYVFIVDSDGEDEATCRQGEQGPPGATGNIATRPKSLAISSSLASDVVRPKVRGVDVKVSSHPEIPHGIAPQQKHGQLTSPTTSEQLAHKPPAFSFVSPTNQKTPPVPAKVSGTTVLEEFHIRRLDVHGASEEETATYFHTTAHDSPLPAWKGASTLVFSPSAQLPGSSLCGSNVADHTRGLAPEAQKKVSTSSALNPREDVRTSPSPASGASLRSPSASYIPVRIVMHSLSPSPKPLTSSSHGSLSTVCSQTSSSGNLSKSGLKSPVPSRLSLLTAILKSNPSHQRPLSPASCPTFSLNSLASSTLTLDQKIKQTPSTPKKSLSSCSLTTGSTEQEQASAESHQPCHLSFFSKTTPLSQAQPPSPPALASSSYAATDTEKIPGSTLRSSTTPPQSQTDLFSLADVPSVTPGLSPLSSSKGRKDGDLRAPEKNRNICTRPSTLSFIPPINESTALSSSGKCFHPSPALSDLIDRSKRTCSQRHSDQRPNPSALPTPPVSRAGSASHPHLGYSILPPESSLTQALQRSPSALHPSCGSATCPSRTGMPDSTASNRSSRVSTPSLPVSLTRTKELISPCALSMSAGPENKKPKQYKTKSSYKAFAAIPTNTLLLEQKALDEPARTESNSKASVSDLPVELCFPAQLRQQTEELCATIDKVLQDSLSMHSSDSPSRPSQTMLGSETIKTPTTHPRAAGRETKYANLSSSSSTTSESQLTKPGVIRPVPIKSKLFLKKEEEVYEPNPFSKYLEDSSGLFSEQDMAIPHKPVSLHPLYQSKLYPPAKSLLRPQTLSHADCLTPGPFSHLSSFSLRDEQEKSPTLLSQDTYNKPGHPMVTIPEHDTLDSKE.

Serine 129 is subject to Phosphoserine. Disordered regions lie at residues 132-154 (EDEA…IATR), 182-207 (SHPE…TSEQ), 303-337 (LAPE…SLRS), 354-388 (PSPK…LKSP), 434-562 (IKQT…TRPS), 597-684 (KRTC…TPSL), 785-837 (SMHS…SQLT), and 929-966 (SLRD…DSKE). The tract at residues 144-810 (PPGATGNIAT…GSETIKTPTT (667 aa)) is required for interaction with ISL1. 2 stretches are compositionally biased toward polar residues: residues 195–207 (KHGQ…TSEQ) and 325–337 (TSPS…SLRS). Low complexity-rich tracts occupy residues 354-387 (PSPK…GLKS), 437-455 (TPST…TGST), and 478-497 (PLSQ…SYAA). The residue at position 486 (serine 486) is a Phosphoserine. A compositionally biased stretch (polar residues) spans 507–521 (TLRSSTTPPQSQTDL). Basic and acidic residues-rich tracts occupy residues 542 to 555 (GRKD…EKNR) and 597 to 607 (KRTCSQRHSDQ). Composition is skewed to polar residues over residues 639–649 (SSLTQALQRSP) and 657–684 (GSAT…TPSL). Residues 785–797 (SMHSSDSPSRPSQ) are compositionally biased toward low complexity. Serine 791 bears the Phosphoserine mark. Positions 798 to 810 (TMLGSETIKTPTT) are enriched in polar residues. The span at 825-834 (SSSSSTTSES) shows a compositional bias: low complexity. The segment covering 937-946 (SPTLLSQDTY) has biased composition (polar residues). Residues 957–966 (PEHDTLDSKE) show a composition bias toward basic and acidic residues.

As to quaternary structure, directly interacts with LMNA. Interacts with ISL1 (via N-terminal domain); the interaction represses ISL1 transactivator activity. Interactions of ISL1 with MLIP1 and GCN5/KAT2A may be mutually exclusive. Expressed in cardiomyoctes. Expression is highly reduced in hypertrophic cardiomyocytes.

It localises to the nucleus. The protein resides in the nucleus envelope. The protein localises to the PML body. It is found in the cytoplasm. Its subcellular location is the cytosol. It localises to the cell membrane. The protein resides in the sarcolemma. Functionally, required for myoblast differentiation into myotubes, possibly acting as a transcriptional regulator of the myogenic program. Required for cardiac adaptation to stress through integrated regulation of the AKT/mTOR pathways and FOXO1. Regulates cardiac homeostasis and plays a role in the protection against cardiac hypertrophy. Binds chromatin. May act as a transcriptional cofactor for ISL1, repressing its transcriptional activity. May also repress MYOCD transcriptional activity. The sequence is that of Muscular LMNA-interacting protein from Rattus norvegicus (Rat).